The sequence spans 301 residues: Cuticle collagen 1 (301 aa).

A signal peptide spans 1-37 (METDGRLKAYKFVAYAAVGFSIAAVASVLLTLPMVYS). Residues 79–82 (RTTR) are furin-like endopeptidase recognition region. Triple-helical region stretches follow at residues 105–134 (GPPG…PGKP), 153–179 (GPPG…PGTD), 183–209 (GSPG…PGTP), and 218–283 (GAPG…KGIC). The tract at residues 109–284 (PAGAPGKPGK…GTPGEKGICP (176 aa)) is disordered. Composition is skewed to pro residues over residues 131-164 (PGKP…PGAP) and 184-193 (SPGPRGPPGP). The span at 194–210 (AGEAGAPGPAGEPGTPA) shows a compositional bias: low complexity. The segment covering 226–258 (SGPPGPPGPPGAPGNDGPPGPPGPKGAPGPDGP) has biased composition (pro residues).

Belongs to the cuticular collagen family. As to quaternary structure, collagen polypeptide chains are complexed within the cuticle by disulfide bonds and other types of covalent cross-links.

Its subcellular location is the secreted. It localises to the extracellular space. Secreted collagen that forms part of the nematode cuticle, which functions as an exoskeleton and a barrier to protect the worm from its environment. Secretion and subsequent incorporation into the cuticle is likely mediated by bli-4, which probably cleaves at the N-terminal consensus furin cleavage site. This is Cuticle collagen 1 (sqt-3) from Caenorhabditis elegans.